The sequence spans 267 residues: 4-hydroxy-tetrahydrodipicolinate reductase (267 aa).

Residues 9–14 (GAAGRM) and aspartate 35 contribute to the NAD(+) site. Arginine 36 serves as a coordination point for NADP(+). NAD(+)-binding positions include 99–101 (GTT) and 123–126 (APNY). Histidine 156 functions as the Proton donor/acceptor in the catalytic mechanism. Histidine 157 serves as a coordination point for (S)-2,3,4,5-tetrahydrodipicolinate. Residue lysine 160 is the Proton donor of the active site. (S)-2,3,4,5-tetrahydrodipicolinate is bound at residue 166–167 (GT).

Belongs to the DapB family.

The protein localises to the cytoplasm. The catalysed reaction is (S)-2,3,4,5-tetrahydrodipicolinate + NAD(+) + H2O = (2S,4S)-4-hydroxy-2,3,4,5-tetrahydrodipicolinate + NADH + H(+). The enzyme catalyses (S)-2,3,4,5-tetrahydrodipicolinate + NADP(+) + H2O = (2S,4S)-4-hydroxy-2,3,4,5-tetrahydrodipicolinate + NADPH + H(+). Its pathway is amino-acid biosynthesis; L-lysine biosynthesis via DAP pathway; (S)-tetrahydrodipicolinate from L-aspartate: step 4/4. Functionally, catalyzes the conversion of 4-hydroxy-tetrahydrodipicolinate (HTPA) to tetrahydrodipicolinate. This chain is 4-hydroxy-tetrahydrodipicolinate reductase, found in Alkalilimnicola ehrlichii (strain ATCC BAA-1101 / DSM 17681 / MLHE-1).